The chain runs to 70 residues: uncharacterized protein (70 aa).

It localises to the plastid. This is an uncharacterized protein from Euglena longa (Euglenophycean alga).